The chain runs to 353 residues: Keratocan (353 aa).

The first 21 residues, 1–21 (MMTLKVCPSLLLLFLVHSVWT), serve as a signal peptide directing secretion. Residues 34–72 (EHWSHYTFECPQECFCPPSFPNALYCDNKGLKEIPAIPA) form the LRRNT domain. 2 disulfides stabilise this stretch: Cys43–Cys49 and Cys47–Cys59. LRR repeat units lie at residues 73–94 (RIWYLYLQNNLIETISEKPFVN), 97–118 (HLRWINLNKNKITNNGIESGVL), 123–143 (RLLYLFLEDNELEEVPAPLPV), 144–165 (GLEQLRLARNKISRIPEGVFSN), 168–188 (NLTMLDLHQNNLLDSALQSDT), 194–214 (SLMQLNIAKNSLKKMPLSIPA), 215–236 (NTLQLFLDNNSIEVIPENYFSA), 239–262 (KVTFLRLNYNKLSDDGIPPNGFNV), 264–283 (SILDLQLSHNQLTKIPPINA), and 284–305 (HLEHLHLDHNRIKSVNGTQICP). N-linked (GlcNAc...) (keratan sulfate) asparagine glycosylation is present at Asn94. Asn168 carries an N-linked (GlcNAc...) asparagine glycan. 2 N-linked (GlcNAc...) (keratan sulfate) asparagine glycosylation sites follow: Asn223 and Asn261. Asn299 carries N-linked (GlcNAc...) asparagine glycosylation. A disulfide bond links Cys304 and Cys344.

It belongs to the small leucine-rich proteoglycan (SLRP) family. SLRP class II subfamily. Post-translationally, binds keratan sulfate chains.

It is found in the secreted. Its subcellular location is the extracellular space. It localises to the extracellular matrix. Functionally, plays an important role in generating and maintaining a transparent matrix within the corneal stroma. This chain is Keratocan (KERA), found in Gallus gallus (Chicken).